A 199-amino-acid polypeptide reads, in one-letter code: Recombination protein RecR (199 aa).

Residues 57 to 72 (CRQCRTLTEDELCPQC) form a C4-type zinc finger. Positions 80–174 (SLLCVVQSPV…TISRIAHGVP (95 aa)) constitute a Toprim domain.

The protein belongs to the RecR family.

Its function is as follows. May play a role in DNA repair. It seems to be involved in an RecBC-independent recombinational process of DNA repair. It may act with RecF and RecO. This chain is Recombination protein RecR, found in Stutzerimonas stutzeri (strain A1501) (Pseudomonas stutzeri).